We begin with the raw amino-acid sequence, 548 residues long: Thermosome subunit beta (548 aa).

The protein belongs to the TCP-1 chaperonin family. Forms a Heterooligomeric complex of two stacked eight-membered rings.

Molecular chaperone; binds unfolded polypeptides in vitro, and has a weak ATPase activity. The sequence is that of Thermosome subunit beta (thsB) from Aeropyrum pernix (strain ATCC 700893 / DSM 11879 / JCM 9820 / NBRC 100138 / K1).